A 1481-amino-acid polypeptide reads, in one-letter code: Cystic fibrosis transmembrane conductance regulator (1481 aa).

Over 1-77 (MQKSPLEKAG…KLINALRRCF (77 aa)) the chain is Cytoplasmic. The helical transmembrane segment at 78-98 (FWRFMFYGILLYLGEVTKAVQ) threads the bilayer. The 285-residue stretch at 81-365 (FMFYGILLYL…WAVQTWYDSL (285 aa)) folds into the ABC transmembrane type-1 1 domain. At 99–122 (PLLLGRIIASYDPDNKVERSIAIY) the chain is on the extracellular side. The chain crosses the membrane as a helical span at residues 123 to 146 (LGIGLCLLFVVRTLLLHPAIFGLH). The Cytoplasmic portion of the chain corresponds to 147–195 (HIGMQMRIAMFSLIYKKTLKLSSRVLDKISIGQLISLLSNNLNKFDEGL). Residues 196-216 (ALAHFVWISPLQVTLLMGLLW) traverse the membrane as a helical segment. Topologically, residues 217 to 222 (ELLQAS) are extracellular. Residues 223–243 (AFCGLAFLIVLALVQAGLGRM) form a helical membrane-spanning segment. Residues 244-298 (MMKYRDQRAGKINERLVITSEMIENIQSVKAYCWEEAMEKMIENLRQTELKLTRK) lie on the Cytoplasmic side of the membrane. The helical transmembrane segment at 299 to 319 (AAYVRYFNSSAFFFSGFFVVF) threads the bilayer. Residues 320–339 (LSVLPYALTKGIILRKIFTT) lie on the Extracellular side of the membrane. A helical membrane pass occupies residues 340 to 358 (ISFCIVLRMAVTRQFPWAV). Residues 359–858 (QTWYDSLGAI…YLRYITVHRS (500 aa)) are Cytoplasmic-facing. Residues Trp-401, Ser-434, 458 to 465 (GSTGAGKT), and Gln-493 each bind ATP. An ABC transporter 1 domain is found at 423–646 (NGDNNLFFSN…RPDFSSKLMG (224 aa)). Cys-524 is lipidated: S-palmitoyl cysteine. 2 positions are modified to phosphoserine: Ser-549 and Ser-660. Positions 654-831 (SAERRNSILT…EEINEEDLKE (178 aa)) are disordered R region. At Ser-670 the chain carries Phosphoserine; by PKA. Ser-686 carries the phosphoserine modification. Lys-688 is covalently cross-linked (Glycyl lysine isopeptide (Lys-Gly) (interchain with G-Cter in ubiquitin)). A phosphoserine mark is found at Ser-700 and Ser-712. The residue at position 717 (Thr-717) is a Phosphothreonine. Residues Ser-737, Ser-768, Ser-790, Ser-795, and Ser-813 each carry the phosphoserine modification. Residues 859–879 (LIFVLIWCIVIFLAEVAASLV) traverse the membrane as a helical segment. Positions 859 to 1155 (LIFVLIWCIV…AVNSSIDVDS (297 aa)) constitute an ABC transmembrane type-1 2 domain. The Extracellular portion of the chain corresponds to 880 to 918 (VLWLFGNTAPQDKENSTKSGNSSYAVIITNTSSYYFFYI). Asn-894, Asn-900, and Asn-909 each carry an N-linked (GlcNAc...) asparagine glycan. A discontinuously helical transmembrane segment spans residues 919 to 939 (YVGVADTLLALGLFRGLPLVH). Residues 940-990 (TLITVSKILHHKMLHSVLQAPMSTLNTLKAGGILNRFSKDIAILDDLLPLT) are Cytoplasmic-facing. The chain crosses the membrane as a helical span at residues 991–1011 (IFDFIQLLLIVVGAIAVVSVL). Residues 1012 to 1013 (QP) are Extracellular-facing. A helical membrane pass occupies residues 1014–1034 (YIFLATVPVIAAFILLRAYFL). Residues 1035 to 1095 (HTSQQLKQLE…TANWFLYLST (61 aa)) lie on the Cytoplasmic side of the membrane. The chain crosses the membrane as a helical span at residues 1096–1116 (LRWFQMRIEMIFVLFFIAVAF). At 1117-1130 (ISILTTGEGEGRVG) the chain is on the extracellular side. A helical membrane pass occupies residues 1131 to 1151 (IILTLAMNIMSTLQWAVNSSI). Topologically, residues 1152-1481 (DVDSLMRSVS…AEEEVQGTRL (330 aa)) are cytoplasmic. The 246-residue stretch at 1199-1444 (VKKDDVWPSG…KSLFRQAISS (246 aa)) folds into the ABC transporter 2 domain. ATP contacts are provided by residues Tyr-1220 and 1245 to 1252 (GRTGSGKS). The segment at 1387-1481 (RTLKQAFADC…AEEEVQGTRL (95 aa)) is interaction with GORASP2. Cys-1396 carries S-palmitoyl cysteine lipidation. Phosphoserine is present on residues Ser-1445 and Ser-1457. A disordered region spans residues 1449-1481 (KLFPHRNSSKHKSRPQITALKEEAEEEVQGTRL). The span at 1450 to 1462 (LFPHRNSSKHKSR) shows a compositional bias: basic residues. Residues 1471–1481 (EAEEEVQGTRL) show a composition bias toward acidic residues. The PDZ-binding signature appears at 1479 to 1481 (TRL).

It belongs to the ABC transporter superfamily. ABCC family. CFTR transporter (TC 3.A.1.202) subfamily. As to quaternary structure, monomer; does not require oligomerization for channel activity. May form oligomers in the membrane. Interacts with SLC26A3, SLC26A6 and NHERF1. Interacts with SHANK2. Interacts with MYO6. Interacts (via C-terminus) with GOPC (via PDZ domain); this promotes CFTR internalization and thereby decreases channel activity. Interacts with SLC4A7 through NHERF1. Found in a complex with MYO5B and RAB11A. Interacts with ANO1. Interacts with SLC26A8. Interacts with AHCYL1; the interaction increases CFTR activity. Interacts with CSE1L. The core-glycosylated form interacts with GORASP2 (via PDZ GRASP-type 1 domain) in respone to ER stress. Interacts with MARCHF2; the interaction leads to CFTR ubiqtuitination and degradation. Interacts with ADGRG2. In terms of processing, N-glycosylated. Phosphorylated; cAMP treatment promotes phosphorylation and activates the channel. Dephosphorylation decreases the ATPase activity (in vitro). Phosphorylation at PKA sites activates the channel. Phosphorylation at PKC sites enhances the response to phosphorylation by PKA. Phosphorylated by AMPK; this inhibits channel activity. Post-translationally, ubiquitinated, leading to its degradation in the lysosome. Deubiquitination by USP10 in early endosomes enhances its endocytic recycling to the cell membrane. Ubiquitinated by RNF185 during ER stress. Ubiquitinated by MARCHF2. As to expression, isoform 1 is expressed in the pancreas. Isoform 2 is specifically expressed in the ventricle.

Its subcellular location is the apical cell membrane. The protein localises to the early endosome membrane. It localises to the cell membrane. The protein resides in the recycling endosome membrane. It is found in the endoplasmic reticulum membrane. Its subcellular location is the nucleus. The catalysed reaction is ATP + H2O + closed Cl(-) channel = ADP + phosphate + open Cl(-) channel.. It catalyses the reaction chloride(in) = chloride(out). The enzyme catalyses hydrogencarbonate(in) = hydrogencarbonate(out). It carries out the reaction ATP + H2O = ADP + phosphate + H(+). Functionally, epithelial ion channel that plays an important role in the regulation of epithelial ion and water transport and fluid homeostasis. Mediates the transport of chloride ions across the cell membrane. Possesses an intrinsic ATPase activity and utilizes ATP to gate its channel; the passive flow of anions through the channel is gated by cycles of ATP binding and hydrolysis by the ATP-binding domains. The ion channel is also permeable to HCO(3)(-); selectivity depends on the extracellular chloride concentration. Exerts its function also by modulating the activity of other ion channels and transporters. Contributes to the regulation of the pH and the ion content of the epithelial fluid layer. Modulates the activity of the epithelial sodium channel (ENaC) complex, in part by regulating the cell surface expression of the ENaC complex. May regulate bicarbonate secretion and salvage in epithelial cells by regulating the transporter SLC4A7. Can inhibit the chloride channel activity of ANO1. Plays a role in the chloride and bicarbonate homeostasis during sperm epididymal maturation and capacitation. This chain is Cystic fibrosis transmembrane conductance regulator, found in Oryctolagus cuniculus (Rabbit).